The chain runs to 137 residues: Nucleoside diphosphate kinase (137 aa).

Residues K9, F57, R85, T91, R102, and N112 each contribute to the ATP site. H115 (pros-phosphohistidine intermediate) is an active-site residue.

The protein belongs to the NDK family. Homotetramer. Mg(2+) is required as a cofactor.

Its subcellular location is the cytoplasm. It carries out the reaction a 2'-deoxyribonucleoside 5'-diphosphate + ATP = a 2'-deoxyribonucleoside 5'-triphosphate + ADP. The enzyme catalyses a ribonucleoside 5'-diphosphate + ATP = a ribonucleoside 5'-triphosphate + ADP. Functionally, major role in the synthesis of nucleoside triphosphates other than ATP. The ATP gamma phosphate is transferred to the NDP beta phosphate via a ping-pong mechanism, using a phosphorylated active-site intermediate. The protein is Nucleoside diphosphate kinase of Helicobacter hepaticus (strain ATCC 51449 / 3B1).